The chain runs to 282 residues: Bifunctional protein FolD (282 aa).

NADP(+)-binding positions include 162–164, Ser187, and Val228; that span reads GRS.

Belongs to the tetrahydrofolate dehydrogenase/cyclohydrolase family. As to quaternary structure, homodimer.

The enzyme catalyses (6R)-5,10-methylene-5,6,7,8-tetrahydrofolate + NADP(+) = (6R)-5,10-methenyltetrahydrofolate + NADPH. The catalysed reaction is (6R)-5,10-methenyltetrahydrofolate + H2O = (6R)-10-formyltetrahydrofolate + H(+). It functions in the pathway one-carbon metabolism; tetrahydrofolate interconversion. Functionally, catalyzes the oxidation of 5,10-methylenetetrahydrofolate to 5,10-methenyltetrahydrofolate and then the hydrolysis of 5,10-methenyltetrahydrofolate to 10-formyltetrahydrofolate. This is Bifunctional protein FolD from Thermus thermophilus (strain ATCC BAA-163 / DSM 7039 / HB27).